We begin with the raw amino-acid sequence, 246 residues long: Anionic trypsin-2 (246 aa).

The signal sequence occupies residues 1–15; it reads MSALLILALVGAAVA. Residues 16–23 constitute a propeptide, activation peptide; that stretch reads FPVDDDDK. Residues 24–244 enclose the Peptidase S1 domain; that stretch reads IVGGYTCRES…YVDWIQNTIA (221 aa). 6 cysteine pairs are disulfide-bonded: cysteine 30–cysteine 160, cysteine 48–cysteine 64, cysteine 132–cysteine 233, cysteine 139–cysteine 206, cysteine 171–cysteine 185, and cysteine 196–cysteine 220. Histidine 63 acts as the Charge relay system in catalysis. The Ca(2+) site is built by glutamate 75, asparagine 77, valine 80, and glutamate 85. Aspartate 107 serves as the catalytic Charge relay system. Serine 200 functions as the Charge relay system in the catalytic mechanism.

The protein belongs to the peptidase S1 family. It depends on Ca(2+) as a cofactor. In terms of tissue distribution, expressed in the pancreas, lung and kidney.

The protein resides in the secreted. It is found in the extracellular space. The catalysed reaction is Preferential cleavage: Arg-|-Xaa, Lys-|-Xaa.. The chain is Anionic trypsin-2 (Prss2) from Mus musculus (Mouse).